A 161-amino-acid chain; its full sequence is MSSFTHFNDQGRAKMVDISDKKATVRTAIACSSIVVTKEIYDKISHNEIGKGDVLAVAQIAGIMAAKRTSDIIPMCHPLLLKGVDVSFDWKQSDEQYRLLIEVKVKTEGSTGVEMEALTAASATALTVYDMCKAVDKGMIIGETYLLEKTGGKSGDYARKS.

Substrate is bound by residues 75–77 (MCH) and 115–116 (ME). Residue Asp-130 is part of the active site.

The protein belongs to the MoaC family. In terms of assembly, homohexamer; trimer of dimers.

It catalyses the reaction (8S)-3',8-cyclo-7,8-dihydroguanosine 5'-triphosphate = cyclic pyranopterin phosphate + diphosphate. The protein operates within cofactor biosynthesis; molybdopterin biosynthesis. Functionally, catalyzes the conversion of (8S)-3',8-cyclo-7,8-dihydroguanosine 5'-triphosphate to cyclic pyranopterin monophosphate (cPMP). The protein is Cyclic pyranopterin monophosphate synthase of Bacillus cereus (strain ATCC 10987 / NRS 248).